The sequence spans 168 residues: UPF0262 protein BRADO6636 (168 aa).

The protein belongs to the UPF0262 family.

This Bradyrhizobium sp. (strain ORS 278) protein is UPF0262 protein BRADO6636.